The sequence spans 383 residues: Activator of 90 kDa heat shock protein ATPase homolog (383 aa).

Disordered stretches follow at residues lysine 97–glutamate 126 and glutamate 209–asparagine 228.

Belongs to the AHA1 family. As to quaternary structure, interacts with hspD/HSP90.

The protein localises to the cytoplasm. Its function is as follows. Co-chaperone that stimulates hspD/HSP90 ATPase activity. The protein is Activator of 90 kDa heat shock protein ATPase homolog (ahsa) of Dictyostelium discoideum (Social amoeba).